The sequence spans 413 residues: Clusterin-associated protein 1 (413 aa).

Residues M185–S308 are a coiled coil. The segment at K303–F413 is disordered. 2 stretches are compositionally biased toward acidic residues: residues D312–L328 and D360–S388. Phosphoserine is present on residues S314, S324, and S326. S409 is modified (phosphoserine).

The protein belongs to the CLUAP1 family. In terms of assembly, interacts with CLU/clusterin. Interacts with UBXN10; the interaction is direct. In terms of tissue distribution, expressed in all tissues tested including heart, kidney, skeletal muscle, eye, liver, ovary, oviduct, testes, lung and brain. Elevated levels in multiciliated cells such as the bronchioles of the lungs, ependymal cells of the brain and cells with a single primary cilia of heart and kidney.

It localises to the cell projection. The protein resides in the cilium. The protein localises to the nucleus. Required for cilia biogenesis. Appears to function within the multiple intraflagellar transport complex B (IFT-B). Key regulator of hedgehog signaling. This chain is Clusterin-associated protein 1 (Cluap1), found in Mus musculus (Mouse).